The chain runs to 954 residues: Glycine dehydrogenase (decarboxylating) (954 aa).

Lysine 704 is subject to N6-(pyridoxal phosphate)lysine.

Belongs to the GcvP family. In terms of assembly, the glycine cleavage system is composed of four proteins: P, T, L and H. The cofactor is pyridoxal 5'-phosphate.

It catalyses the reaction N(6)-[(R)-lipoyl]-L-lysyl-[glycine-cleavage complex H protein] + glycine + H(+) = N(6)-[(R)-S(8)-aminomethyldihydrolipoyl]-L-lysyl-[glycine-cleavage complex H protein] + CO2. The glycine cleavage system catalyzes the degradation of glycine. The P protein binds the alpha-amino group of glycine through its pyridoxal phosphate cofactor; CO(2) is released and the remaining methylamine moiety is then transferred to the lipoamide cofactor of the H protein. The chain is Glycine dehydrogenase (decarboxylating) from Vibrio cholerae serotype O1 (strain ATCC 39541 / Classical Ogawa 395 / O395).